Here is a 175-residue protein sequence, read N- to C-terminus: Large ribosomal subunit protein bL17m (175 aa).

The transit peptide at 1-8 (MRLSVAAA) directs the protein to the mitochondrion. The interval 155-175 (DLRQSQEASNHSSHTAQTPGI) is disordered. Polar residues predominate over residues 161-175 (EASNHSSHTAQTPGI).

Belongs to the bacterial ribosomal protein bL17 family. As to quaternary structure, component of the mitochondrial large ribosomal subunit (mt-LSU). Mature mammalian 55S mitochondrial ribosomes consist of a small (28S) and a large (39S) subunit. The 28S small subunit contains a 12S ribosomal RNA (12S mt-rRNA) and 30 different proteins. The 39S large subunit contains a 16S rRNA (16S mt-rRNA), a copy of mitochondrial valine transfer RNA (mt-tRNA(Val)), which plays an integral structural role, and 52 different proteins. As to expression, detected in adrenal gland, mammary gland and adipose tissue.

The protein localises to the mitochondrion. The protein is Large ribosomal subunit protein bL17m (MRPL17) of Homo sapiens (Human).